The chain runs to 181 residues: Peptide deformylase (181 aa).

Residues Cys-99 and His-141 each coordinate Fe cation. Residue Glu-142 is part of the active site. His-145 contributes to the Fe cation binding site.

The protein belongs to the polypeptide deformylase family. Requires Fe(2+) as cofactor.

The catalysed reaction is N-terminal N-formyl-L-methionyl-[peptide] + H2O = N-terminal L-methionyl-[peptide] + formate. Removes the formyl group from the N-terminal Met of newly synthesized proteins. Requires at least a dipeptide for an efficient rate of reaction. N-terminal L-methionine is a prerequisite for activity but the enzyme has broad specificity at other positions. The sequence is that of Peptide deformylase from Chlamydia trachomatis serovar A (strain ATCC VR-571B / DSM 19440 / HAR-13).